Here is a 251-residue protein sequence, read N- to C-terminus: Cell division protein ZapD (251 aa).

It belongs to the ZapD family. Interacts with FtsZ.

The protein resides in the cytoplasm. Cell division factor that enhances FtsZ-ring assembly. Directly interacts with FtsZ and promotes bundling of FtsZ protofilaments, with a reduction in FtsZ GTPase activity. The sequence is that of Cell division protein ZapD from Burkholderia orbicola (strain MC0-3).